The chain runs to 367 residues: Queuine tRNA-ribosyltransferase (367 aa).

Aspartate 92 acts as the Proton acceptor in catalysis. Substrate is bound by residues 92–96 (DSGGF), aspartate 146, glutamine 188, and glycine 215. The segment at 246 to 252 (GVGTPKD) is RNA binding. The active-site Nucleophile is the aspartate 265. Cysteine 303, cysteine 305, cysteine 308, and histidine 334 together coordinate Zn(2+).

The protein belongs to the queuine tRNA-ribosyltransferase family. Homodimer. Within each dimer, one monomer is responsible for RNA recognition and catalysis, while the other monomer binds to the replacement base PreQ1. Requires Zn(2+) as cofactor.

The catalysed reaction is 7-aminomethyl-7-carbaguanine + guanosine(34) in tRNA = 7-aminomethyl-7-carbaguanosine(34) in tRNA + guanine. It functions in the pathway tRNA modification; tRNA-queuosine biosynthesis. In terms of biological role, catalyzes the base-exchange of a guanine (G) residue with the queuine precursor 7-aminomethyl-7-deazaguanine (PreQ1) at position 34 (anticodon wobble position) in tRNAs with GU(N) anticodons (tRNA-Asp, -Asn, -His and -Tyr). Catalysis occurs through a double-displacement mechanism. The nucleophile active site attacks the C1' of nucleotide 34 to detach the guanine base from the RNA, forming a covalent enzyme-RNA intermediate. The proton acceptor active site deprotonates the incoming PreQ1, allowing a nucleophilic attack on the C1' of the ribose to form the product. After dissociation, two additional enzymatic reactions on the tRNA convert PreQ1 to queuine (Q), resulting in the hypermodified nucleoside queuosine (7-(((4,5-cis-dihydroxy-2-cyclopenten-1-yl)amino)methyl)-7-deazaguanosine). This chain is Queuine tRNA-ribosyltransferase, found in Francisella tularensis subsp. tularensis (strain FSC 198).